A 393-amino-acid polypeptide reads, in one-letter code: Putative B3 domain-containing protein Os06g0632500 (393 aa).

3 consecutive DNA-binding regions (TF-B3) follow at residues 27-123 (LSVP…FDPG), 141-238 (RPRF…FLQN), and 316-393 (NSFT…VQRR).

The protein resides in the nucleus. The chain is Putative B3 domain-containing protein Os06g0632500 from Oryza sativa subsp. japonica (Rice).